Reading from the N-terminus, the 741-residue chain is G2 and S phase-expressed protein 1 (741 aa).

Ser-73 is subject to Phosphoserine. 3 disordered regions span residues 101 to 120 (EVAQ…ETFV), 131 to 428 (EKEQ…KTVS), and 450 to 512 (FKVP…STRR). The segment covering 106-120 (ATPQNPVNQGKETFV) has biased composition (polar residues). The span at 131 to 147 (EKEQKRDRSPMSLKRET) shows a compositional bias: basic and acidic residues. 4 positions are modified to phosphoserine: Ser-139, Ser-153, Ser-191, and Ser-245. The span at 173–209 (SPVSAGPAQTQSNQGLPCSSQPLPRESSTSQPPSQAG) shows a compositional bias: polar residues. Residues 246-261 (IQRTKLVNEKGSQSDV) are compositionally biased toward polar residues. A compositionally biased stretch (low complexity) spans 310-321 (SSTSGSASSLES). The residue at position 311 (Ser-311) is a Phosphoserine. Over residues 337–355 (QRSSIPASGSQRRTSTSKS) the composition is skewed to polar residues. Residues 360-372 (PAASRQALPAAPA) show a composition bias toward low complexity. The segment covering 398-408 (SPLTQQPQTPE) has biased composition (polar residues). Ser-460 is modified (phosphoserine). Thr-465 carries the phosphothreonine modification. Residues Ser-476, Ser-493, Ser-509, and Ser-514 each carry the phosphoserine modification. The span at 478–497 (TPASRVVSSTPVRRSSGTTP) shows a compositional bias: low complexity. Residue Thr-518 is modified to Phosphothreonine. 4 positions are modified to phosphoserine: Ser-521, Ser-541, Ser-582, and Ser-599. Residues 550-640 (LSSEPRRRST…VHGGGCSHTP (91 aa)) are disordered. The segment covering 578 to 593 (QGLSSDESSSPPSSVP) has biased composition (low complexity). Thr-696 bears the Phosphothreonine mark. Residues Ser-720, Ser-726, and Ser-736 each carry the phosphoserine modification.

Phosphorylated in mitosis.

It localises to the cytoplasm. The protein localises to the cytoskeleton. May be involved in p53-induced cell cycle arrest in G2/M phase by interfering with microtubule rearrangements that are required to enter mitosis. Overexpression delays G2/M phase progression. This is G2 and S phase-expressed protein 1 (Gtse1) from Mus musculus (Mouse).